A 63-amino-acid polypeptide reads, in one-letter code: Large ribosomal subunit protein uL30 (63 aa).

The protein belongs to the universal ribosomal protein uL30 family. In terms of assembly, part of the 50S ribosomal subunit.

The chain is Large ribosomal subunit protein uL30 from Xylella fastidiosa (strain M23).